A 592-amino-acid polypeptide reads, in one-letter code: Beta-xylosidase (592 aa).

The signal sequence occupies residues 1-19 (MYLNACRALTLISVLSLLA). Cys-20 is lipidated: N-palmitoyl cysteine. Cys-20 is lipidated: S-diacylglycerol cysteine.

This sequence belongs to the glycosyl hydrolase 43 family.

Its subcellular location is the cell outer membrane. Its function is as follows. Xylosidase involved in ulvan degradation. Ulvan is the main polysaccharide component of the Ulvales (green seaweed) cell wall. It is composed of disaccharide building blocks comprising 3-sulfated rhamnose (Rha3S) linked to D-glucuronic acid (GlcA), L-iduronic acid (IduA), or D-xylose (Xyl). Beta-xylosidase converts Xyl-Rha3S, a product of alpha-L-rhamnosidase acting on Rha-Xyl-Rha3S oligosaccharides, further to Xyl and Rha3S. This is Beta-xylosidase from Formosa agariphila (strain DSM 15362 / KCTC 12365 / LMG 23005 / KMM 3901 / M-2Alg 35-1).